Consider the following 892-residue polypeptide: MGSCISLQISCDQVLTRAYSCFFSLGNYIHKLKDNIVALEKAIEDLTATRDDVLRRVQMEEGKGLERLQQVQVWLKRVEIIRNQFYDLLSARNIEIQRLCFYSNCSTNLSSSYTYGQRVFLMIKEVENLNSNGFFEIVAAPAPKLEMRPIQPTIMGRETIFQRAWNRLMDDGVGTMGLYGMGGVGKTTLLTQIHNTLHDTKNGVDIVIWVVVSSDLQIHKIQEDIGEKLGFIGKEWNKKQESQKAVDILNCLSKKRFVLLLDDIWKKVDLTKIGIPSQTRENKCKVVFTTRSLDVCARMGVHDPMEVQCLSTNDAWELFQEKVGQISLGSHPDILELAKKVAGKCRGLPLALNVIGETMAGKRAVQEWHHAVDVLTSYAAEFSGMDDHILLILKYSYDNLNDKHVRSCFQYCALYPEDYSIKKYRLIDYWICEGFIDGNIGKERAVNQGYEILGTLVRACLLSEEGKNKLEVKMHDVVREMALWTLSDLGKNKERCIVQAGSGLRKVPKVEDWGAVRRLSLMNNGIEEISGSPECPELTTLFLQENKSLVHISGEFFRHMRKLVVLDLSENHQLDGLPEQISELVALRYLDLSHTNIEGLPACLQDLKTLIHLNLECMRRLGSIAGISKLSSLRTLGLRNSNIMLDVMSVKELHLLEHLEILTIDIVSTMVLEQMIDAGTLMNCMQEVSIRCLIYDQEQDTKLRLPTMDSLRSLTMWNCEISEIEIERLTWNTNPTSPCFFNLSQVIIHVCSSLKDLTWLLFAPNITYLMIEQLEQLQELISHAKATGVTEEEQQQLHKIIPFQKLQILHLSSLPELKSIYWISLSFPCLSGIYVERCPKLRKLPLDSKTGTVGKKFVLQYKETEWIESVEWKDEATKLHFLPSTKLVYILS.

A coiled-coil region spans residues 24-63 (SLGNYIHKLKDNIVALEKAIEDLTATRDDVLRRVQMEEGK). An NB-ARC domain is found at 137-440 (IVAAPAPKLE…ICEGFIDGNI (304 aa)). Position 180–187 (180–187 (GMGGVGKT)) interacts with ATP. 6 LRR repeats span residues 515-536 (AVRR…PECP), 537-559 (ELTT…FFRH), 562-584 (KLVV…ISEL), 586-608 (ALRY…QDLK), 609-631 (TLIH…SKLS), and 632-654 (SLRT…KELH).

It belongs to the disease resistance NB-LRR family.

Functionally, potential disease resistance protein. This Arabidopsis thaliana (Mouse-ear cress) protein is Putative disease resistance protein At4g10780.